The primary structure comprises 281 residues: L-cysteine S-thiosulfotransferase subunit SoxA (281 aa).

The N-terminal stretch at 1–25 (MTKHGFLLATLVLAGATLPIGPVTA) is a signal peptide. The cysteines at positions 99 and 130 are disulfide-linked. The Cytochrome c domain occupies 175-281 (AAYEQGKRFY…LELNGPGARK (107 aa)). 2 residues coordinate heme: Cys195 and His199. Arg238 contributes to the substrate binding site. Position 242 (Cys242) interacts with heme. Residue Cys242 is the Cysteine persulfide intermediate of the active site.

The protein belongs to the SoxA family. In terms of assembly, heterodimer of SoxA and SoxX. Requires heme as cofactor. Post-translationally, cysteine persulfide at Cys-242.

The protein localises to the periplasm. It carries out the reaction L-cysteinyl-[SoxY protein] + thiosulfate + 2 Fe(III)-[cytochrome c] = S-sulfosulfanyl-L-cysteinyl-[SoxY protein] + 2 Fe(II)-[cytochrome c] + 2 H(+). The catalysed reaction is S-sulfanyl-L-cysteinyl-[SoxY protein] + thiosulfate + 2 Fe(III)-[cytochrome c] = S-(2-sulfodisulfanyl)-L-cysteinyl-[SoxY protein] + 2 Fe(II)-[cytochrome c] + 2 H(+). C-type monoheme cytochrome, which is part of the SoxAX cytochrome complex involved in sulfur oxidation. The SoxAX complex catalyzes the formation of a heterodisulfide bond between the conserved cysteine residue on a sulfur carrier SoxYZ complex subunit SoxY and thiosulfate or other inorganic sulfur substrates. This leads to the intermediary formation of conspicuous sulfur globules inside of the cells. The sequence is that of L-cysteine S-thiosulfotransferase subunit SoxA from Allochromatium vinosum (Chromatium vinosum).